Consider the following 306-residue polypeptide: Ornithine carbamoyltransferase (306 aa).

Carbamoyl phosphate contacts are provided by residues 51–54, Gln78, Arg102, and 129–132; these read STRT and HPCQ. L-ornithine-binding positions include Asn160, Asp223, and 227-228; that span reads SM. Residues 263 to 264 and Arg291 each bind carbamoyl phosphate; that span reads CL.

It belongs to the aspartate/ornithine carbamoyltransferase superfamily. OTCase family.

It localises to the cytoplasm. The catalysed reaction is carbamoyl phosphate + L-ornithine = L-citrulline + phosphate + H(+). The protein operates within amino-acid biosynthesis; L-arginine biosynthesis; L-arginine from L-ornithine and carbamoyl phosphate: step 1/3. Functionally, reversibly catalyzes the transfer of the carbamoyl group from carbamoyl phosphate (CP) to the N(epsilon) atom of ornithine (ORN) to produce L-citrulline. This is Ornithine carbamoyltransferase from Trichormus variabilis (strain ATCC 29413 / PCC 7937) (Anabaena variabilis).